Here is a 31-residue protein sequence, read N- to C-terminus: Photosystem II reaction center protein T (31 aa).

A helical transmembrane segment spans residues 3–23 (ALVYTFLLVGTLGIIFFSIFF).

It belongs to the PsbT family. In terms of assembly, PSII is composed of 1 copy each of membrane proteins PsbA, PsbB, PsbC, PsbD, PsbE, PsbF, PsbH, PsbI, PsbJ, PsbK, PsbL, PsbM, PsbT, PsbY, PsbZ, Psb30/Ycf12, at least 3 peripheral proteins of the oxygen-evolving complex and a large number of cofactors. It forms dimeric complexes.

The protein localises to the plastid. The protein resides in the chloroplast thylakoid membrane. In terms of biological role, found at the monomer-monomer interface of the photosystem II (PS II) dimer, plays a role in assembly and dimerization of PSII. PSII is a light-driven water plastoquinone oxidoreductase, using light energy to abstract electrons from H(2)O, generating a proton gradient subsequently used for ATP formation. This is Photosystem II reaction center protein T from Chlamydomonas reinhardtii (Chlamydomonas smithii).